We begin with the raw amino-acid sequence, 134 residues long: kinetoplast-associated protein 3 (134 aa).

Positions 1-10 (MLRRSPTLLR) are excised as a propeptide. Positions 106-124 (PKAPKAAKSASSKVKTAAK) are enriched in low complexity. Residues 106 to 134 (PKAPKAAKSASSKVKTAAKTAKKTTAARK) are disordered. Over residues 125-134 (TAKKTTAARK) the composition is skewed to basic residues.

This sequence belongs to the KAP family. Associates with the kinetoplast DNA network.

It localises to the mitochondrion matrix. The protein resides in the kinetoplast. Its function is as follows. Histone H1-like DNA-binding protein involved in the organization and segregation of kinetoplast DNA (kDNA). The mitochondrial DNA of kinetoplastid protozoa consists of about 5,000 minicircles and 20 to 30 maxicircles. These circular DNAs are held together by catenation into a highly organized compact disk structure referred to as a kinetoplast DNA (kDNA) network. Binds preferentially to a specific fragment of minicircle DNA and is able to compact kDNA networks through DNA charge neutralization and condensation. The protein is kinetoplast-associated protein 3 (KAP3) of Crithidia fasciculata.